The sequence spans 409 residues: Multifunctional CCA protein (409 aa).

Positions 8 and 11 each coordinate ATP. CTP contacts are provided by Gly8 and Arg11. Residues Asp21 and Asp23 each contribute to the Mg(2+) site. ATP contacts are provided by Arg91, Arg137, and Arg140. Positions 91, 137, and 140 each coordinate CTP. An HD domain is found at 228 to 329 (TGAHTLSVLL…LELLQSFDVF (102 aa)).

This sequence belongs to the tRNA nucleotidyltransferase/poly(A) polymerase family. Bacterial CCA-adding enzyme type 1 subfamily. Monomer. Can also form homodimers and oligomers. Mg(2+) serves as cofactor. It depends on Ni(2+) as a cofactor.

It catalyses the reaction a tRNA precursor + 2 CTP + ATP = a tRNA with a 3' CCA end + 3 diphosphate. It carries out the reaction a tRNA with a 3' CCA end + 2 CTP + ATP = a tRNA with a 3' CCACCA end + 3 diphosphate. Its function is as follows. Catalyzes the addition and repair of the essential 3'-terminal CCA sequence in tRNAs without using a nucleic acid template. Adds these three nucleotides in the order of C, C, and A to the tRNA nucleotide-73, using CTP and ATP as substrates and producing inorganic pyrophosphate. tRNA 3'-terminal CCA addition is required both for tRNA processing and repair. Also involved in tRNA surveillance by mediating tandem CCA addition to generate a CCACCA at the 3' terminus of unstable tRNAs. While stable tRNAs receive only 3'-terminal CCA, unstable tRNAs are marked with CCACCA and rapidly degraded. The chain is Multifunctional CCA protein from Pseudomonas fluorescens (strain ATCC BAA-477 / NRRL B-23932 / Pf-5).